The following is a 360-amino-acid chain: Squamosa promoter-binding-like protein 7 (360 aa).

Over residues 74–89 (AQGSGGGGGGGGGGSA) the composition is skewed to gly residues. The disordered stretch occupies residues 74 to 98 (AQGSGGGGGGGGGGSADQGKRKEKA). The SBP-type zinc-finger motif lies at 105–182 (VPRCQVEGCD…AGHNERRRRS (78 aa)). Zn(2+) is bound by residues cysteine 108, cysteine 113, cysteine 130, histidine 133, cysteine 149, cysteine 152, histidine 156, and cysteine 168. Residues 165 to 181 (KKSCRRRLAGHNERRRR) carry the Bipartite nuclear localization signal motif. Over residues 172-182 (LAGHNERRRRS) the composition is skewed to basic residues. 3 disordered regions span residues 172-196 (LAGHNERRRRSNASEAMARGSAHPH), 261-306 (FFSD…HENQ), and 318-360 (TTAA…ARVV).

Expressed in young panicles.

The protein resides in the nucleus. Functionally, trans-acting factor that binds specifically to the consensus nucleotide sequence 5'-TNCGTACAA-3'. May be involved in panicle development. The sequence is that of Squamosa promoter-binding-like protein 7 (SPL7) from Oryza sativa subsp. japonica (Rice).